Consider the following 199-residue polypeptide: uncharacterized protein (199 aa).

It to U.parvum UU376.

This is an uncharacterized protein from Ureaplasma parvum serovar 3 (strain ATCC 700970).